A 188-amino-acid polypeptide reads, in one-letter code: Probable nicotinate-nucleotide adenylyltransferase (188 aa).

Belongs to the NadD family.

The enzyme catalyses nicotinate beta-D-ribonucleotide + ATP + H(+) = deamido-NAD(+) + diphosphate. Its pathway is cofactor biosynthesis; NAD(+) biosynthesis; deamido-NAD(+) from nicotinate D-ribonucleotide: step 1/1. Its function is as follows. Catalyzes the reversible adenylation of nicotinate mononucleotide (NaMN) to nicotinic acid adenine dinucleotide (NaAD). In Rhizobium meliloti (strain 1021) (Ensifer meliloti), this protein is Probable nicotinate-nucleotide adenylyltransferase.